The following is a 448-amino-acid chain: Zinc finger CCCH domain-containing protein 43 (448 aa).

Residues 1 to 106 (MVNSEEIADG…GWSENESENV (106 aa)) are disordered. The span at 24–45 (SSHDRSLSDLNHAAEDLSDKLK) shows a compositional bias: basic and acidic residues. Residues 63–79 (VSESNGGLDSNAVVTIN) are compositionally biased toward polar residues. Positions 80–89 (QEEEEEEEDR) are enriched in acidic residues. 5 C3H1-type zinc fingers span residues 110 to 138 (RPGAEDCSFYMRTGSCKFGSSCKFNHPLA), 158 to 186 (KLGLIDCKYYFRTGGCKYGETCRFNHTIP), 204 to 232 (RPGEVECPYYMRNGSCKYGAECKFNHPDP), 346 to 374 (RPDQPECSYYMKTGDCKFKFNCKYHHPKN), and 392 to 420 (RPDQNICTYYSRYGICKFGPACRFDHSVQ). Residues 424–448 (STESSQAIVEPPQVSANGNESDGWN) are disordered. Polar residues predominate over residues 437–448 (VSANGNESDGWN).

The protein resides in the nucleus. The sequence is that of Zinc finger CCCH domain-containing protein 43 from Arabidopsis thaliana (Mouse-ear cress).